The chain runs to 587 residues: Folylpolyglutamate synthase, mitochondrial (587 aa).

The N-terminal 42 residues, 1 to 42 (MSWARSRLCSTLSLAAVSARGATTEGAARRGMSAWPAPQEPG), are a transit peptide targeting the mitochondrion. 106 to 109 (GKGS) is an ATP binding site. 3 residues coordinate Mg(2+): S130, E200, and H228. ATP is bound by residues R363 and D377. At S539 the chain carries Phosphoserine.

Belongs to the folylpolyglutamate synthase family. As to quaternary structure, monomer. A monovalent cation serves as cofactor. As to expression, with non-specific probe, highest content in kidney and liver and lowest in spleen, lung and small intestine, and readily detectable in all of the tumors except hepatoma. Isoform 1 and isoform 2 expressed in leukemic cells and isoform 4 and isoform 5 in liver cells. Isoform 1 and isoform 2 exclusively expressed in hepatoma and Lewis lung carcinoma. Isoform 1 and isoform 2 also expressed in bone marrow, small intestine and spleen. Kidney expresses isoform 1, isoform 2, isoform 4 and isoform 5.

It is found in the mitochondrion inner membrane. The protein resides in the mitochondrion matrix. The protein localises to the cytoplasm. The catalysed reaction is (6S)-5,6,7,8-tetrahydrofolyl-(gamma-L-Glu)(n) + L-glutamate + ATP = (6S)-5,6,7,8-tetrahydrofolyl-(gamma-L-Glu)(n+1) + ADP + phosphate + H(+). It participates in cofactor biosynthesis; tetrahydrofolylpolyglutamate biosynthesis. Inhibited by ammonium sulfate. Inhibited by pentaglutamate derivative of DDATHF, but isoform 2 is inhibited to a greater extent at lower concentrations of the compound that is isoform 5. Isoform 5 is virtually unaffected by H(4)PteGlu(5) and 5,10-CH(2)-H(4)PteGlu(5) at concentrations that substantially inhibits the activity of isoform 2. Isoform 2 and 5 are equally sensitive to polyglutamates of 10-CHO-H(4)-PteGlu. In terms of biological role, catalyzes conversion of folates to polyglutamate derivatives allowing concentration of folate compounds in the cell and the intracellular retention of these cofactors, which are important substrates for most of the folate-dependent enzymes that are involved in one-carbon transfer reactions involved in purine, pyrimidine and amino acid synthesis. Dihydrofolate, tetrahydrofolate, 5,10-methylenetetrahydrofolate, 10-formyltetrahydrofolate and 5-formyltetrahydrofolate are the best substrates. Folic acid and 5-methyltetrahydrofolate can also act as substrates. The chain is Folylpolyglutamate synthase, mitochondrial (Fpgs) from Mus musculus (Mouse).